The primary structure comprises 262 residues: Hemin import ATP-binding protein HmuV (262 aa).

The region spanning 1–247 (MRNLTLQRGR…ERIKQIFAFD (247 aa)) is the ABC transporter domain. 31–38 (GPNGTGKS) provides a ligand contact to ATP.

This sequence belongs to the ABC transporter superfamily. Heme (hemin) importer (TC 3.A.1.14.5) family. As to quaternary structure, the complex is composed of two ATP-binding proteins (HmuV), two transmembrane proteins (HmuU) and a solute-binding protein (HmuT).

The protein localises to the cell inner membrane. Functionally, part of the ABC transporter complex HmuTUV involved in hemin import. Responsible for energy coupling to the transport system. This chain is Hemin import ATP-binding protein HmuV, found in Plesiomonas shigelloides (Aeromonas shigelloides).